Here is a 487-residue protein sequence, read N- to C-terminus: NAD(+)--arginine ADP-ribosyltransferase EFV (487 aa).

Positions 2–51 form a coiled coil; it reads SQLNKWQKELQALQKANYQETDNQLFNVYRQSLIDIKKRLKVYTENAESL. In terms of domain architecture, TR mART core spans 315-487; that stretch reads LDFFGQSDLQ…DNILEVTILG (173 aa). NAD(+)-binding positions include 346–358 and 394–400; these read TSDA…KILR and RGVSANE. Residues Arg394, Ser415, and Glu463 contribute to the active site. Glu463 lines the NAD(+) pocket.

Its subcellular location is the secreted. It carries out the reaction L-arginyl-[protein] + NAD(+) = N(omega)-(ADP-D-ribosyl)-L-arginyl-[protein] + nicotinamide + H(+). In terms of biological role, a probable mono(ADP-ribosyl)transferase, it may ADP-ribosylate Arg in target protein(s). Upon expression in yeast cells causes cell death. In Enterococcus faecalis (strain ATCC 700802 / V583), this protein is NAD(+)--arginine ADP-ribosyltransferase EFV.